Reading from the N-terminus, the 749-residue chain is Catalase-peroxidase 2 (749 aa).

The first 27 residues, 1-27 (MFKRTIPLFAAFTLAISPSVFPNYAYA), serve as a signal peptide directing secretion. Residues 107–229 (WHAAGTYRIY…LAATVMGLIY (123 aa)) constitute a cross-link (tryptophyl-tyrosyl-methioninium (Trp-Tyr) (with M-255)). Histidine 108 (proton acceptor) is an active-site residue. Residues 229 to 255 (YVNPEGPNGVPDPLAAAEKIRETFGRM) constitute a cross-link (tryptophyl-tyrosyl-methioninium (Tyr-Met) (with W-107)). Histidine 270 provides a ligand contact to heme b.

It belongs to the peroxidase family. Peroxidase/catalase subfamily. In terms of assembly, homodimer or homotetramer. The cofactor is heme b. Post-translationally, formation of the three residue Trp-Tyr-Met cross-link is important for the catalase, but not the peroxidase activity of the enzyme.

It carries out the reaction H2O2 + AH2 = A + 2 H2O. The enzyme catalyses 2 H2O2 = O2 + 2 H2O. Functionally, bifunctional enzyme with both catalase and broad-spectrum peroxidase activity. This is Catalase-peroxidase 2 from Legionella pneumophila (strain Paris).